Reading from the N-terminus, the 318-residue chain is Esterase FVEG_12639 (318 aa).

Residues Ser156, Asp255, and His285 contribute to the active site.

It belongs to the AB hydrolase 3 family.

In terms of biological role, esterase; part of the Fusarium detoxification of benzoxazolinone cluster 2 (FDB2) involved in the degradation of benzoxazolinones produced by the host plant. Maize, wheat, and rye produce the 2 benzoxazinone phytoanticipins 2,4-dihy-droxy-7-methoxy-1,4-benzoxazin-3-one (DIMBOA) and 2,4-dihydroxy-1,4-benzoxazin-3-one (DIBOA) that, due to their inherent instability once released, spontaneously degrade to the more stable corresponding benzoxazolinones, 6-methoxy-2-benzoxazolinone (MBOA) and 2-benzoxazolinone (BOA), respectively. The first step in the detoxification of benzoxazolinones involves the hydrolysis of the cyclic ester bond of benzoxazolinones by the FDB1 cluster gamma-lactamase MBL1 to aminophenols. MBL1 is able to convert BOA into 2-aminophenol (2-AP), as well as MBOA into 5-methoxy-2-aminophenol (2-AMP). The FDB2 cluster N-malonyltransferase FDB2/NAT1 then metabolizes aminophenols via N-malonylation to non-toxic malonamic acids. FDB2/NAT1 converts 2-AP into N-(2-hydroxyphenyl) malonamic acid (HPMA) and 2-AMP into N-(2-hydroxy-4-methoxyphenyl) malonamic acid (HMPMA). The duplicated dienlactone hydrolases DLH1 and DLH2 may provide redundant function for hydrolyzing the lactone moiety in the BOA molecule. The roles of the amidases an other enzymes encoded by the 2 FDB clusters have not been identified so far. In Gibberella moniliformis (strain M3125 / FGSC 7600) (Maize ear and stalk rot fungus), this protein is Esterase FVEG_12639.